The primary structure comprises 463 residues: Cysteine--tRNA ligase (463 aa).

Cysteine 29 is a Zn(2+) binding site. Residues 31–41 (PTVYNYAHIGN) carry the 'HIGH' region motif. Cysteine 211, histidine 236, and glutamate 240 together coordinate Zn(2+). The 'KMSKS' region motif lies at 269 to 273 (KMSKS). Residue lysine 272 participates in ATP binding.

The protein belongs to the class-I aminoacyl-tRNA synthetase family. As to quaternary structure, monomer. The cofactor is Zn(2+).

Its subcellular location is the cytoplasm. The catalysed reaction is tRNA(Cys) + L-cysteine + ATP = L-cysteinyl-tRNA(Cys) + AMP + diphosphate. The chain is Cysteine--tRNA ligase from Caulobacter vibrioides (strain ATCC 19089 / CIP 103742 / CB 15) (Caulobacter crescentus).